We begin with the raw amino-acid sequence, 91 residues long: Small ribosomal subunit protein bS20 (91 aa).

Positions 1-23 (MANTPSAKKRAKQAEKRRSHNAS) are disordered. Positions 7 to 20 (AKKRAKQAEKRRSH) are enriched in basic residues.

This sequence belongs to the bacterial ribosomal protein bS20 family.

Functionally, binds directly to 16S ribosomal RNA. The protein is Small ribosomal subunit protein bS20 of Pseudomonas aeruginosa (strain LESB58).